A 128-amino-acid polypeptide reads, in one-letter code: ADA histone acetyltransferase complex component 2 (128 aa).

Its subcellular location is the cytoplasm. The protein resides in the nucleus. The protein is ADA histone acetyltransferase complex component 2 (AHC2) of Saccharomyces cerevisiae (strain ATCC 204508 / S288c) (Baker's yeast).